A 243-amino-acid polypeptide reads, in one-letter code: Ubiquinone/menaquinone biosynthesis C-methyltransferase UbiE (243 aa).

Residues T69, D90, and D116–A117 contribute to the S-adenosyl-L-methionine site.

Belongs to the class I-like SAM-binding methyltransferase superfamily. MenG/UbiE family.

The enzyme catalyses a 2-demethylmenaquinol + S-adenosyl-L-methionine = a menaquinol + S-adenosyl-L-homocysteine + H(+). It catalyses the reaction a 2-methoxy-6-(all-trans-polyprenyl)benzene-1,4-diol + S-adenosyl-L-methionine = a 5-methoxy-2-methyl-3-(all-trans-polyprenyl)benzene-1,4-diol + S-adenosyl-L-homocysteine + H(+). Its pathway is quinol/quinone metabolism; menaquinone biosynthesis; menaquinol from 1,4-dihydroxy-2-naphthoate: step 2/2. It functions in the pathway cofactor biosynthesis; ubiquinone biosynthesis. In terms of biological role, methyltransferase required for the conversion of demethylmenaquinol (DMKH2) to menaquinol (MKH2) and the conversion of 2-polyprenyl-6-methoxy-1,4-benzoquinol (DDMQH2) to 2-polyprenyl-3-methyl-6-methoxy-1,4-benzoquinol (DMQH2). The sequence is that of Ubiquinone/menaquinone biosynthesis C-methyltransferase UbiE from Burkholderia multivorans (strain ATCC 17616 / 249).